The following is a 950-amino-acid chain: 2-oxoglutarate dehydrogenase E1 component (950 aa).

Belongs to the alpha-ketoglutarate dehydrogenase family. As to quaternary structure, homodimer. Part of the 2-oxoglutarate dehydrogenase (OGDH) complex composed of E1 (2-oxoglutarate dehydrogenase), E2 (dihydrolipoamide succinyltransferase) and E3 (dihydrolipoamide dehydrogenase); the complex contains multiple copies of the three enzymatic components (E1, E2 and E3). The cofactor is thiamine diphosphate.

It catalyses the reaction N(6)-[(R)-lipoyl]-L-lysyl-[protein] + 2-oxoglutarate + H(+) = N(6)-[(R)-S(8)-succinyldihydrolipoyl]-L-lysyl-[protein] + CO2. Its function is as follows. E1 component of the 2-oxoglutarate dehydrogenase (OGDH) complex which catalyzes the decarboxylation of 2-oxoglutarate, the first step in the conversion of 2-oxoglutarate to succinyl-CoA and CO(2). The chain is 2-oxoglutarate dehydrogenase E1 component (odhA) from Cupriavidus necator (strain ATCC 17699 / DSM 428 / KCTC 22496 / NCIMB 10442 / H16 / Stanier 337) (Ralstonia eutropha).